A 483-amino-acid chain; its full sequence is Pre-glycoprotein polyprotein GP complex (483 aa).

A lipid anchor (N-myristoyl glycine; by host) is attached at Gly2. The Extracellular segment spans residues 2–17; the sequence is GQLVSFIGEIPAIVHE. A helical membrane pass occupies residues 18 to 32; sequence ALNVALIAVSIIAIM. Position 33 (Lys33) is a topological domain, cytoplasmic. A helical transmembrane segment spans residues 34-53; sequence GLINIWKSGLFQLIMFLILA. Extracellular segments lie at residues 54–58 and 59–422; these read GRSCS and ISIG…SLVD. Cys57 serves as a coordination point for Zn(2+). N-linked (GlcNAc...) asparagine; by host glycans are attached at residues Asn73, Asn88, Asn130, and Asn179. Intrachain disulfides connect Cys85/Cys223, Cys186/Cys204, Cys269/Cys282, Cys291/Cys300, and Cys354/Cys375. Residue Asn216 is glycosylated (N-linked (GlcNAc...) asparagine; by host). Residues Asn355, Asn363, Asn380, and Asn385 are each glycosylated (N-linked (GlcNAc...) asparagine; by host). A helical transmembrane segment spans residues 423–443; the sequence is LCFWSTLFYTASIFLHLLHIP. The Cytoplasmic segment spans residues 444–483; that stretch reads THRHIIGEGCPKPHRLTSDSLCACGFFQLKGRPTRWARIP. Zn(2+) is bound by residues His445, His447, Cys453, His457, Cys465, and Cys467.

The protein belongs to the arenaviridae GPC protein family. In terms of assembly, homotetramer; disulfide-linked. Homotetramer. GP2 homotetramers bind through ionic interactions with GP1 homotetramers to form the GP complex together with the stable signal peptide. The GP-C polyprotein interacts with the host protease MBTPS1/SKI-1 resulting in the polyprotein processing. In terms of processing, specific enzymatic cleavages in vivo yield mature proteins. GP-C polyprotein is cleaved in the endoplasmic reticulum by the host protease MBTPS1. Only cleaved glycoprotein is incorporated into virions. Post-translationally, the SSP remains stably associated with the GP complex following cleavage by signal peptidase and plays crucial roles in the trafficking of GP through the secretory pathway. Myristoylation is necessary for GP2-mediated fusion activity.

It is found in the virion membrane. The protein localises to the host endoplasmic reticulum membrane. It localises to the host Golgi apparatus membrane. The protein resides in the host cell membrane. Its function is as follows. Class I viral fusion protein that directs fusion of viral and host endosomal membranes, leading to delivery of the nucleocapsid into the cytoplasm. Membrane fusion is mediated by irreversible conformational changes induced upon acidification in the endosome. Stable signal peptide (SSP): cleaved and functions as a signal peptide. In addition, it is also retained as the third component of the GP complex. The SSP is required for efficient glycoprotein expression, post-translational maturation cleavage of GP1 and GP2, glycoprotein transport to the cell surface plasma membrane, formation of infectious virus particles, and acid pH-dependent glycoprotein-mediated cell fusion. In terms of biological role, interacts with the host receptor. This chain is Pre-glycoprotein polyprotein GP complex, found in Peromyscus californicus (California mouse).